We begin with the raw amino-acid sequence, 100 residues long: Small ribosomal subunit protein uS14c (100 aa).

This sequence belongs to the universal ribosomal protein uS14 family. Part of the 30S ribosomal subunit.

Its subcellular location is the plastid. The protein resides in the chloroplast. In terms of biological role, binds 16S rRNA, required for the assembly of 30S particles. In Phaeodactylum tricornutum (strain CCAP 1055/1), this protein is Small ribosomal subunit protein uS14c.